A 1624-amino-acid chain; its full sequence is Reverse gyrase (1624 aa).

The RG N-terminal-type zinc finger occupies 1-42; the sequence is MKAIYRGMCPNCRGAITDERLSNKNPCEGCLSEPILSEDYNE. Cysteine 9, cysteine 12, cysteine 27, and cysteine 30 together coordinate Zn(2+). Residues glutamine 89 and 106-113 contribute to the ATP site; that span reads APTGMGKS. In terms of domain architecture, Helicase ATP-binding spans 93–256; it reads VKRIIRGKSF…KLKKQLAKLL (164 aa). The DEAD box signature appears at 213-216; that stretch reads DDVD. The tract at residues 636 to 1624 is topoisomerase I; sequence DLVKSALMIV…LYEEIKRYVR (989 aa). A Toprim domain is found at 640 to 803; it reads SALMIVESPN…NIKRIEFHEV (164 aa). Position 646 (glutamate 646) interacts with Mg(2+). An RG C-terminal-type zinc finger spans residues 720 to 749; that stretch reads IKRCRDCGHQFVDWEQKGVCPRCGSRNVHD. Cysteine 723, cysteine 726, cysteine 739, and cysteine 742 together coordinate Zn(2+). Residue aspartate 772 participates in Mg(2+) binding. In terms of domain architecture, Topo IA-type catalytic spans 819 to 1623; the sequence is NEDRVNAQLV…ELYEEIKRYV (805 aa). Residues 1107–1222 form the DOD-type homing endonuclease domain; the sequence is IFGVILGKGT…LSVYLYQIGI (116 aa). The active-site O-(5'-phospho-DNA)-tyrosine intermediate is the tyrosine 1366.

It in the N-terminal section; belongs to the DEAD box helicase family. DDVD subfamily. This sequence in the C-terminal section; belongs to the type IA topoisomerase family. In terms of assembly, monomer. The cofactor is Zn(2+). It depends on Mg(2+) as a cofactor. In terms of processing, this protein undergoes a protein self splicing that involves a post-translational excision of the intervening region (intein) followed by peptide ligation.

The protein localises to the cytoplasm. The enzyme catalyses ATP + H2O = ADP + phosphate + H(+). Modifies the topological state of DNA by introducing positive supercoils in an ATP-dependent process, increasing the linking number in steps of +1. Binds to single-stranded DNA, transiently cleaves and then rejoins the ends, introducing a positive supercoil in the process. The scissile phosphodiester is attacked by the catalytic tyrosine of the enzyme, resulting in the formation of a DNA-(5'-phosphotyrosyl)-enzyme intermediate. Probably involved in rewinding DNA strands in regions of the chromosome that have opened up to allow replication, transcription, DNA repair and/or for DNA protection. The chain is Reverse gyrase from Pyrococcus horikoshii (strain ATCC 700860 / DSM 12428 / JCM 9974 / NBRC 100139 / OT-3).